A 685-amino-acid chain; its full sequence is Mannan-binding lectin serine protease 2 (685 aa).

The first 19 residues, 1 to 19 (MRLLIVLGLLWSLVATLLG), serve as a signal peptide directing secretion. The CUB 1 domain maps to 20 to 137 (SKWPEPVFGR…TGFEAFYAAE (118 aa)). Ca(2+)-binding residues include glutamate 67 and aspartate 75. A disulfide bond links cysteine 72 and cysteine 90. N-linked (GlcNAc...) asparagine glycosylation is present at asparagine 103. Aspartate 120, serine 122, asparagine 123, aspartate 138, and valine 139 together coordinate Ca(2+). The region spanning 138 to 181 (DVDECRTSLGDSVPCDHYCHNYLGGYYCSCRVGYILHQNKHTCS) is the EGF-like; calcium-binding domain. 4 disulfides stabilise this stretch: cysteine 152/cysteine 165, cysteine 167/cysteine 180, cysteine 184/cysteine 211, and cysteine 241/cysteine 259. Asparagine 158 carries the post-translational modification (3R)-3-hydroxyasparagine. Residues tyrosine 159 and glycine 162 each coordinate Ca(2+). In terms of domain architecture, CUB 2 spans 184–296 (CSGQVFTGRS…TGWKIHYTST (113 aa)). The N-linked (GlcNAc...) asparagine glycan is linked to asparagine 285. 2 consecutive Sushi domains span residues 298–363 (QPCP…ECSI) and 364–431 (IDCG…VCKP). 7 cysteine pairs are disulfide-bonded: cysteine 300/cysteine 348, cysteine 328/cysteine 361, cysteine 366/cysteine 411, cysteine 396/cysteine 429, cysteine 433/cysteine 551, cysteine 597/cysteine 617, and cysteine 628/cysteine 659. Positions 444–683 (IIGGQPAKPG…YIPWIENIIN (240 aa)) constitute a Peptidase S1 domain. Residues histidine 482 and aspartate 531 each act as charge relay system in the active site. The active-site Charge relay system is the serine 632. A glycan (N-linked (GlcNAc...) asparagine) is linked at asparagine 641.

This sequence belongs to the peptidase S1 family. As to quaternary structure, homodimer; disulfide-linked. Binds MBL2. Isoform 2 binds to MASP1. Binds SERPING1. Post-translationally, N-glycosylated. The iron and 2-oxoglutarate dependent 3-hydroxylation of aspartate and asparagine is (R) stereospecific within EGF domains. Highly expressed in liver. Secreted in plasma.

The protein localises to the secreted. The enzyme catalyses Selective cleavage after Arg-223 in complement component C2 (-Ser-Leu-Gly-Arg-|-Lys-Ile-Gln-Ile) and after Arg-76 in complement component C4 (-Gly-Leu-Gln-Arg-|-Ala-Leu-Glu-Ile).. Serum protease that plays an important role in the activation of the complement system via mannose-binding lectin. After activation by auto-catalytic cleavage it cleaves C2 and C4, leading to their activation and to the formation of C3 convertase. The sequence is that of Mannan-binding lectin serine protease 2 (Masp2) from Rattus norvegicus (Rat).